Consider the following 421-residue polypeptide: Synaptotagmin-15 (421 aa).

The Extracellular portion of the chain corresponds to 1–4; sequence MAEQ. The helical; Signal-anchor for type III membrane protein transmembrane segment at 5–29 threads the bilayer; it reads LALVIGGTIGGLLLLLLIGASCCLW. Topologically, residues 30–421 are cytoplasmic; sequence RRFCATLTYE…WHALCRTTEP (392 aa). Residues 47 to 68 are disordered; sequence MATTAASSGQRDRPCQPHARTQ. C2 domains follow at residues 147–264 and 278–399; these read CLGR…RRVI and EFGD…EHWD.

This sequence belongs to the synaptotagmin family. Homodimer.

Its subcellular location is the cell membrane. In terms of biological role, may be involved in the trafficking and exocytosis of secretory vesicles in non-neuronal tissues. The protein is Synaptotagmin-15 (SYT15) of Homo sapiens (Human).